Reading from the N-terminus, the 377-residue chain is Nitric oxide reductase FlRd-NAD(+) reductase (377 aa).

The protein belongs to the FAD-dependent oxidoreductase family. The cofactor is FAD.

It localises to the cytoplasm. It carries out the reaction 2 reduced [nitric oxide reductase rubredoxin domain] + NAD(+) + H(+) = 2 oxidized [nitric oxide reductase rubredoxin domain] + NADH. It participates in nitrogen metabolism; nitric oxide reduction. One of at least two accessory proteins for anaerobic nitric oxide (NO) reductase. Reduces the rubredoxin moiety of NO reductase. The sequence is that of Nitric oxide reductase FlRd-NAD(+) reductase from Escherichia coli O139:H28 (strain E24377A / ETEC).